A 304-amino-acid polypeptide reads, in one-letter code: ULP1-interacting protein 4 (304 aa).

Residues aspartate 72–threonine 269 are disordered. The segment covering glutamate 73–asparagine 83 has biased composition (basic and acidic residues). The span at threonine 129–glycine 149 shows a compositional bias: polar residues. Phosphoserine is present on serine 140. A compositionally biased stretch (basic and acidic residues) spans glutamate 155–glutamate 183. Residues serine 185 and serine 205 each carry the phosphoserine modification.

Interacts with ULP1.

Its subcellular location is the endoplasmic reticulum membrane. The protein localises to the mitochondrion outer membrane. It localises to the nucleus envelope. In Saccharomyces cerevisiae (strain ATCC 204508 / S288c) (Baker's yeast), this protein is ULP1-interacting protein 4 (UIP4).